The following is a 147-amino-acid chain: UPF0735 ACT domain-containing protein BH1214 (147 aa).

Positions 70–145 (TLSINLEDRS…AVEKVELVGS (76 aa)) constitute an ACT domain.

It belongs to the UPF0735 family.

The sequence is that of UPF0735 ACT domain-containing protein BH1214 from Halalkalibacterium halodurans (strain ATCC BAA-125 / DSM 18197 / FERM 7344 / JCM 9153 / C-125) (Bacillus halodurans).